Reading from the N-terminus, the 268-residue chain is Taurine import ATP-binding protein TauB (268 aa).

The ABC transporter domain occupies 4–236 (LAIRNISMRF…EGVDADLREV (233 aa)). 41-48 (GPSGCGKT) serves as a coordination point for ATP.

This sequence belongs to the ABC transporter superfamily. Taurine importer (TC 3.A.1.17.1) family. In terms of assembly, the complex is composed of two ATP-binding proteins (TauB), two transmembrane proteins (TauC) and a solute-binding protein (TauA).

It is found in the cell inner membrane. The catalysed reaction is taurine(out) + ATP + H2O = taurine(in) + ADP + phosphate + H(+). In terms of biological role, part of the ABC transporter complex TauABC involved in taurine import. Responsible for energy coupling to the transport system. The polypeptide is Taurine import ATP-binding protein TauB (Jannaschia sp. (strain CCS1)).